We begin with the raw amino-acid sequence, 1516 residues long: Myosin-14 (1516 aa).

The Myosin N-terminal SH3-like domain occupies 7 to 56 (NVGSCVWVEDPEVAWIDGEVIEVKGSDIKVKCTSGKTVAIKVSSAYPKDV). In terms of domain architecture, Myosin motor spans 61 to 738 (SGVDDMTRLA…QMADLDARRN (678 aa)). ATP is bound by residues 155 to 162 (GESGAGKT) and 208 to 216 (NNNSSRFGK). Actin-binding regions lie at residues 494-528 (LIEK…YQTF), 530-553 (DHKH…AGDV), 588-612 (FPLL…KQQL), and 612-634 (LVTL…KPNN). 6 IQ domains span residues 741–770 (LGRA…VATN), 764–793 (LRKV…DAAV), 789–818 (RDAA…AAVS), 812–841 (LYFA…DKAA), 837–866 (QDKA…AAIT), and 860–889 (LKKA…AAKE). Residues 890–1056 (TGVLEAAKSK…ENKILRQKSL (167 aa)) adopt a coiled-coil conformation. The segment at 1061–1085 (GHLPPTPVKGSQNGHFSSKESPFNG) is disordered. Residues 1069 to 1084 (KGSQNGHFSSKESPFN) are compositionally biased toward polar residues. The Dilute domain occupies 1158–1463 (DRLVQMIGSA…IANMRVLMTE (306 aa)).

It belongs to the TRAFAC class myosin-kinesin ATPase superfamily. Myosin family. Plant myosin class XI subfamily. In terms of assembly, homodimer.

In terms of biological role, myosin heavy chain that is required for the cell cycle-regulated transport of various organelles and proteins for their segregation. Functions by binding with its tail domain to receptor proteins on organelles and exerting force with its N-terminal motor domain against actin filaments, thereby transporting its cargo along polarized actin cables. The polypeptide is Myosin-14 (XI-H) (Arabidopsis thaliana (Mouse-ear cress)).